The sequence spans 85 residues: UPF0386 protein Bind_1628 (85 aa).

The protein belongs to the UPF0386 family.

This Beijerinckia indica subsp. indica (strain ATCC 9039 / DSM 1715 / NCIMB 8712) protein is UPF0386 protein Bind_1628.